Reading from the N-terminus, the 598-residue chain is DNA polymerase alpha subunit B (598 aa).

A compositionally biased stretch (polar residues) spans serine 112 to arginine 140. The interval serine 112–arginine 167 is disordered. Serine 126 bears the Phosphoserine mark. Threonine 127 and threonine 130 each carry phosphothreonine. Residues serine 141, serine 147, serine 152, and serine 154 each carry the phosphoserine modification. Residues serine 141 to serine 158 are compositionally biased toward low complexity.

Belongs to the DNA polymerase alpha subunit B family. As to quaternary structure, component of the alpha DNA polymerase complex (also known as the alpha DNA polymerase-primase complex) consisting of four subunits: the catalytic subunit POLA1, the regulatory subunit POLA2, and primase complex subunits PRIM1 and PRIM2 respectively. Within the complex, POLA1 directly interacts with PRIM2/p58. Post-translationally, phosphorylated in a cell cycle-dependent manner, in G2/M phase.

The protein localises to the nucleus. In terms of biological role, accessory subunit of the DNA polymerase alpha complex (also known as the alpha DNA polymerase-primase complex) which plays an essential role in the initiation of DNA synthesis. During the S phase of the cell cycle, the DNA polymerase alpha complex (composed of a catalytic subunit POLA1, an accessory subunit POLA2 and two primase subunits, the catalytic subunit PRIM1 and the regulatory subunit PRIM2) is recruited to DNA at the replicative forks via direct interactions with MCM10 and WDHD1. The primase subunit of the polymerase alpha complex initiates DNA synthesis by oligomerising short RNA primers on both leading and lagging strands. These primers are initially extended by the polymerase alpha catalytic subunit and subsequently transferred to polymerase delta and polymerase epsilon for processive synthesis on the lagging and leading strand, respectively. In Homo sapiens (Human), this protein is DNA polymerase alpha subunit B (POLA2).